The following is a 929-amino-acid chain: Urea transporter 2 (929 aa).

Positions 1–11 (MSDHPLKEMSD) are enriched in basic and acidic residues. The disordered stretch occupies residues 1–89 (MSDHPLKEMS…KRRESELPRR (89 aa)). The span at 31-42 (SELSSPTWPSSS) shows a compositional bias: low complexity. Over residues 55–88 (PEEKDLRSSDEDSHIVKIEKPNERSKRRESELPR) the composition is skewed to basic and acidic residues. 9 helical membrane-spanning segments follow: residues 133 to 155 (GAAQ…GLLI), 162 to 179 (IAGA…LALS), 184 to 204 (AIAS…VAVF), 212 to 232 (WWLL…SSAL), 241 to 261 (LPVF…ATGH), 310 to 330 (GGVI…HAAI), 349 to 371 (IYTG…MFYV), 378 to 399 (LLAL…NMMA), and 400 to 420 (VVGV…FLLL). The tract at residues 451–480 (SDEQKPPNGGGGEQSHGGGQRKAEEGSETV) is disordered. Over residues 458-470 (NGGGGEQSHGGGQ) the composition is skewed to gly residues. Ser-486 carries the phosphoserine modification. Transmembrane regions (helical) follow at residues 609–629 (GILI…SGCL), 647–667 (AIAA…MAVF), 675–695 (WWLL…SSAL), and 704–724 (LPVF…ATGH). Residue Asn-742 is glycosylated (N-linked (GlcNAc...) asparagine). 4 helical membrane-spanning segments follow: residues 773-793 (GGIF…HAAI), 812-832 (IYFG…GGMF), 841-861 (LLAI…ANML), and 863-883 (VFGL…FLLL).

The protein belongs to the urea transporter family. As to quaternary structure, interacts with SNAPIN which enhances its urea transport activity. As to expression, expressed in the inner medulla of the kidney. Expressed in both the inner and outer renal medulla of the kidney.

The protein localises to the apical cell membrane. The protein resides in the cell membrane. The enzyme catalyses urea(in) = urea(out). With respect to regulation, inhibited by phloretin. Activated by vasopressin, forskolin, 3-isobutyl-1-methylxanthine (IBMX) and cAMP. Inhibited by phloretin. Its activity is regulated as follows. Inhibited by urea analogs and phloretin and activated by forskolin. With respect to regulation, inhibited by phloretin and activated by forskolin. Mediates the transport of urea driven by a concentration gradient across the cell membrane of the kidney inner medullary collecting duct which is critical to the urinary concentrating mechanism. The polypeptide is Urea transporter 2 (Slc14a2) (Rattus norvegicus (Rat)).